We begin with the raw amino-acid sequence, 115 residues long: Mobilization protein MbeC (115 aa).

The protein to E.coli MbaC and MbkC. As to quaternary structure, homodimer. Interacts with MbeA and MbeB to form the relaxosome.

Required for efficient mobilization of ColE1 plasmid and is thus essential to promote the specific transfer of the plasmid during conjugation. Probably functions by inducing DNA bending, helping the MbeA relaxase to melt the DNA around the nic site and cleave the phosphodiester bond. Binds specifically double-stranded DNA (dsDNA) containing the ColE1 oriT but does not recognize the inverted repeat (IR). This is Mobilization protein MbeC (mbeC) from Escherichia coli.